The following is a 38-amino-acid chain: VGKNVICIHSGQCLIPCIDAGMRFGICKNGICDCTPKG.

Cystine bridges form between Cys-7–Cys-27, Cys-13–Cys-32, and Cys-17–Cys-34.

In terms of tissue distribution, expressed by the venom gland.

It localises to the secreted. Blocks voltage-gated potassium (Kv) channel and augments neurite extension via NGF/TrkA signaling pathway. The polypeptide is Toxin BmK NSPK (Olivierus martensii (Manchurian scorpion)).